The sequence spans 108 residues: UPF0145 protein MADE_1007770 (108 aa).

Belongs to the UPF0145 family.

This is UPF0145 protein MADE_1007770 from Alteromonas mediterranea (strain DSM 17117 / CIP 110805 / LMG 28347 / Deep ecotype).